The chain runs to 425 residues: UDP-N-acetylglucosamine 1-carboxyvinyltransferase (425 aa).

Position 24–25 (K24–N25) interacts with phosphoenolpyruvate. Residue R95 coordinates UDP-N-acetyl-alpha-D-glucosamine. The Proton donor role is filled by C119. The residue at position 119 (C119) is a 2-(S-cysteinyl)pyruvic acid O-phosphothioketal. UDP-N-acetyl-alpha-D-glucosamine-binding positions include R124–Q128, D308, and V330.

It belongs to the EPSP synthase family. MurA subfamily.

The protein resides in the cytoplasm. It catalyses the reaction phosphoenolpyruvate + UDP-N-acetyl-alpha-D-glucosamine = UDP-N-acetyl-3-O-(1-carboxyvinyl)-alpha-D-glucosamine + phosphate. It participates in cell wall biogenesis; peptidoglycan biosynthesis. In terms of biological role, cell wall formation. Adds enolpyruvyl to UDP-N-acetylglucosamine. The sequence is that of UDP-N-acetylglucosamine 1-carboxyvinyltransferase from Deinococcus deserti (strain DSM 17065 / CIP 109153 / LMG 22923 / VCD115).